We begin with the raw amino-acid sequence, 91 residues long: Small ribosomal subunit protein uS19 (91 aa).

The protein belongs to the universal ribosomal protein uS19 family.

In terms of biological role, protein S19 forms a complex with S13 that binds strongly to the 16S ribosomal RNA. The chain is Small ribosomal subunit protein uS19 from Parasynechococcus marenigrum (strain WH8102).